Reading from the N-terminus, the 1060-residue chain is Carbamoyl phosphate synthase large chain (1060 aa).

Positions 1-401 are carboxyphosphate synthetic domain; that stretch reads MPKRTDIRKI…SLLKACRSLE (401 aa). ATP contacts are provided by R129, R169, G175, G176, R208, I210, E215, G241, I242, H243, Q284, and E298. An ATP-grasp 1 domain is found at 133–327; sequence KQLMEELNQP…IAKLAAKIAV (195 aa). Positions 284, 298, and 300 each coordinate Mg(2+). Mn(2+) contacts are provided by Q284, E298, and N300. Residues 402 to 546 form an oligomerization domain region; it reads IGVDHIKIAD…YSTYAVENES (145 aa). The carbamoyl phosphate synthetic domain stretch occupies residues 547 to 929; it reads LISDKASILV…ALYKAFEAAY (383 aa). One can recognise an ATP-grasp 2 domain in the interval 671 to 861; it reads EATLQALNIP…MAQVATKVIL (191 aa). ATP-binding residues include R707, A746, L748, E752, G777, V778, H779, S780, Q820, and E832. Mg(2+) is bound by residues Q820, E832, and N834. Residues Q820, E832, and N834 each coordinate Mn(2+). Residues 930–1060 form the MGS-like domain; sequence LHMPDYGNIV…SRAFTLKVLD (131 aa). An allosteric domain region spans residues 930-1060; sequence LHMPDYGNIV…SRAFTLKVLD (131 aa).

The protein belongs to the CarB family. Composed of two chains; the small (or glutamine) chain promotes the hydrolysis of glutamine to ammonia, which is used by the large (or ammonia) chain to synthesize carbamoyl phosphate. Tetramer of heterodimers (alpha,beta)4. The cofactor is Mg(2+). Mn(2+) serves as cofactor.

It catalyses the reaction hydrogencarbonate + L-glutamine + 2 ATP + H2O = carbamoyl phosphate + L-glutamate + 2 ADP + phosphate + 2 H(+). It carries out the reaction hydrogencarbonate + NH4(+) + 2 ATP = carbamoyl phosphate + 2 ADP + phosphate + 2 H(+). It functions in the pathway amino-acid biosynthesis; L-arginine biosynthesis; carbamoyl phosphate from bicarbonate: step 1/1. The protein operates within pyrimidine metabolism; UMP biosynthesis via de novo pathway; (S)-dihydroorotate from bicarbonate: step 1/3. Large subunit of the glutamine-dependent carbamoyl phosphate synthetase (CPSase). CPSase catalyzes the formation of carbamoyl phosphate from the ammonia moiety of glutamine, carbonate, and phosphate donated by ATP, constituting the first step of 2 biosynthetic pathways, one leading to arginine and/or urea and the other to pyrimidine nucleotides. The large subunit (synthetase) binds the substrates ammonia (free or transferred from glutamine from the small subunit), hydrogencarbonate and ATP and carries out an ATP-coupled ligase reaction, activating hydrogencarbonate by forming carboxy phosphate which reacts with ammonia to form carbamoyl phosphate. This is Carbamoyl phosphate synthase large chain from Streptococcus agalactiae serotype III (strain NEM316).